The sequence spans 209 residues: MLPRHSCSLLLFLFLLPSVPMEPHPPSSTLPPFLAPEWDLLSPRVALSRGAPAGPPLLFLLEAGAYGEPAGAPANRSRRGVSETAPASRRGELAVCDAVSGWVTDRRTAVDLRGREVEVLGEVPAAGGSPLRQYFFETRCKAESAGEGGPGVGGGGCRGVDRRHWLSECKAKQSYVRALTADSQGRVGWRWIRIDTACVCTLLSRTGRA.

The N-terminal stretch at 1 to 21 is a signal peptide; it reads MLPRHSCSLLLFLFLLPSVPM. Positions 22 to 79 are excised as a propeptide; it reads EPHPPSSTLPPFLAPEWDLLSPRVALSRGAPAGPPLLFLLEAGAYGEPAGAPANRSRR. The N-linked (GlcNAc...) asparagine glycan is linked to asparagine 75. Cystine bridges form between cysteine 96/cysteine 169, cysteine 140/cysteine 198, and cysteine 157/cysteine 200.

This sequence belongs to the NGF-beta family.

It localises to the secreted. Functionally, target-derived survival factor for peripheral sensory sympathetic neurons. May promote ameloblast differentiation and subsequent reduction in proliferation of ameloblasts. This Mus musculus (Mouse) protein is Neurotrophin-4 (Ntf4).